Consider the following 330-residue polypeptide: Short chain dehydrogenase macD (330 aa).

5 residues coordinate NADP(+): lysine 57, aspartate 86, asparagine 113, tyrosine 204, and lysine 208. The Proton donor role is filled by tyrosine 204. Lysine 208 functions as the Lowers pKa of active site Tyr in the catalytic mechanism.

The protein belongs to the short-chain dehydrogenases/reductases (SDR) family.

The protein operates within secondary metabolite biosynthesis; terpenoid biosynthesis. In terms of biological role, short chain dehydrogenase; part of the gene cluster that mediates the biosynthesis of macrophorins, isoprenoid epoxycyclohexenones containing cyclized drimane moieties. The first step of the pathway is the synthesis of 6-methylsalicylic acid (6-MSA) by the polyketide synthase macA. 6-MSA is then converted to m-cresol by the decarboxylase macB. The cytochrome P450 monooxygenase macC then catalyzes the oxidation of m-cresol to toluquinol. Epoxidation of toluquinol is then performed by the short chain dehydrogenase macD, with the help of macE, and a further prenylation by macG leads to 7-deacetoxyyanuthone A. The next step is the hydroxylation of C-22 of 7-deacetoxyyanuthone A by the cytochrome P450 monooxygenase macH to yield 22-deacetylyanuthone A. O-Mevalon transferase macI then attaches mevalon to the hydroxyl group of 22-deacetylyanuthone A to produce yanuthone E. The terpene cyclase macJ catalyzes the cyclization of 22-deacetylyanuthone A to macrophorin A. MacJ is also able to catalyze cyclization of yanuthone E and 7-deacetoxyyanuthone A to their corresponding macrophorins. The macJ products can be further modified by macH and macJ, as well as by the FAD-dependent monooxygenase macF, to produce additional macrophorins, including 4'-oxomacrophorin A, 4'-oxomacrophorin D and 4'-oxomacrophorin E. In Penicillium terrestre, this protein is Short chain dehydrogenase macD.